A 631-amino-acid polypeptide reads, in one-letter code: Phosphomethylpyrimidine synthase (631 aa).

Substrate is bound by residues N239, M268, Y297, H333, 353 to 355, 394 to 397, and E433; these read SRG and DGLR. H437 is a binding site for Zn(2+). Position 460 (Y460) interacts with substrate. H501 is a Zn(2+) binding site. [4Fe-4S] cluster-binding residues include C581, C584, and C589.

It belongs to the ThiC family. Homodimer. The cofactor is [4Fe-4S] cluster.

It catalyses the reaction 5-amino-1-(5-phospho-beta-D-ribosyl)imidazole + S-adenosyl-L-methionine = 4-amino-2-methyl-5-(phosphooxymethyl)pyrimidine + CO + 5'-deoxyadenosine + formate + L-methionine + 3 H(+). The protein operates within cofactor biosynthesis; thiamine diphosphate biosynthesis. Catalyzes the synthesis of the hydroxymethylpyrimidine phosphate (HMP-P) moiety of thiamine from aminoimidazole ribotide (AIR) in a radical S-adenosyl-L-methionine (SAM)-dependent reaction. This is Phosphomethylpyrimidine synthase from Escherichia coli O81 (strain ED1a).